The chain runs to 334 residues: Transaldolase (334 aa).

Residue Lys136 is the Schiff-base intermediate with substrate of the active site.

The protein belongs to the transaldolase family. Type 1 subfamily. Homodimer.

It localises to the cytoplasm. The enzyme catalyses D-sedoheptulose 7-phosphate + D-glyceraldehyde 3-phosphate = D-erythrose 4-phosphate + beta-D-fructose 6-phosphate. It participates in carbohydrate degradation; pentose phosphate pathway; D-glyceraldehyde 3-phosphate and beta-D-fructose 6-phosphate from D-ribose 5-phosphate and D-xylulose 5-phosphate (non-oxidative stage): step 2/3. Functionally, transaldolase is important for the balance of metabolites in the pentose-phosphate pathway. In Nostoc punctiforme (strain ATCC 29133 / PCC 73102), this protein is Transaldolase.